The chain runs to 406 residues: MQNQGIKKIVLAYSGGLDTSAIIPWLKENYGGCEVVAFVADIGQERSDLEGVEQKALQSGASECHVVDLREEFIRDYVYPVLQTGALYEGSYLLGTSMARPIIAKAQVELALKVGADAVCHGATGKGNDQVRFETTYTALAPHLKVVAPWREWNLRSREALLDYLKERNIPTTASLEKIYSRDENAWHISTEGGVLESPWNAPNKDCWVWTVDPQEAPDQPEQVTITVEKGCVVAVNGEALSPYKCLETLNVLGAKHGVGRIDIVENRLVGIKSRGCYETPGGTIMVAALRGVEQLVLDRDSFKWREQLGLEMSYVVYDGRWFAPLRRSLQASAEALAEEVNGEVVLQLYKGQVTAIQKKSANSLYSEEFATFGEDEVYDHSHAGGFIRLFSLSSRIRALNEIKNK.

ATP is bound by residues 12 to 20 and A40; that span reads AYSGGLDTS. Residues Y92 and S97 each contribute to the L-citrulline site. G122 contacts ATP. T124, N128, and D129 together coordinate L-aspartate. N128 contributes to the L-citrulline binding site. L-citrulline contacts are provided by R132, S181, S190, E266, and Y278.

Belongs to the argininosuccinate synthase family. Type 1 subfamily. As to quaternary structure, homotetramer.

The protein resides in the cytoplasm. It carries out the reaction L-citrulline + L-aspartate + ATP = 2-(N(omega)-L-arginino)succinate + AMP + diphosphate + H(+). Its pathway is amino-acid biosynthesis; L-arginine biosynthesis; L-arginine from L-ornithine and carbamoyl phosphate: step 2/3. This Serratia proteamaculans (strain 568) protein is Argininosuccinate synthase.